Consider the following 391-residue polypeptide: Cdc42 effector protein 1 (391 aa).

A phosphoserine mark is found at Ser-19 and Ser-27. Thr-34 carries the phosphothreonine modification. Residues 38–52 (ISHPLGDFRHTMHVG) form the CRIB domain. Ser-39 carries the phosphoserine modification. Arg-53 bears the Omega-N-methylarginine mark. Phosphoserine occurs at positions 65, 73, 77, 101, 113, 121, and 139. The tract at residues 163 to 189 (ISRLPRSEKPHDRDRDGSFPSEPGLRR) is disordered. A compositionally biased stretch (basic and acidic residues) spans 167–179 (PRSEKPHDRDRDG). Ser-180, Ser-190, Ser-192, and Ser-195 each carry phosphoserine. 8 consecutive repeat copies span residues 220 to 226 (PAAETPA), 227 to 233 (PAANPPA), 234 to 240 (PTANPTG), 241 to 247 (PAANPPA), 248 to 254 (TTANPPA), 255 to 261 (PAANPSA), 262 to 268 (PAATPTG), and 269 to 275 (PAANPPA). The segment at 220-275 (PAAETPAPAANPPAPTANPTGPAANPPATTANPPAPAANPSAPAATPTGPAANPPA) is 8 X 7 AA tandem repeats of [PT]-[AT]-A-[ENT]-[PT]-[PTS]-[AG]. The tract at residues 221 to 338 (AAETPAPAAN…HHYPEMDARQ (118 aa)) is disordered. Over residues 236–270 (ANPTGPAANPPATTANPPAPAANPSAPAATPTGPA) the composition is skewed to low complexity. A Phosphoserine modification is found at Ser-303. Basic and acidic residues predominate over residues 327–338 (GGHHYPEMDARQ). A phosphoserine mark is found at Ser-350 and Ser-353. A disordered region spans residues 354–391 (LDEEWRAPQAGSRTPVPSTVQANTFEFADAEEDDEVKV). Residues 364–377 (GSRTPVPSTVQANT) show a composition bias toward polar residues. Positions 381-391 (ADAEEDDEVKV) are enriched in acidic residues.

It belongs to the BORG/CEP family. As to quaternary structure, interacts with RHOQ and CDC42, in a GTP-dependent manner. As to expression, endothelial and bone marrow stromal cells.

Its subcellular location is the endomembrane system. It localises to the cytoplasm. The protein localises to the cytoskeleton. Functionally, probably involved in the organization of the actin cytoskeleton. Induced membrane extensions in fibroblasts. The sequence is that of Cdc42 effector protein 1 (CDC42EP1) from Homo sapiens (Human).